A 208-amino-acid chain; its full sequence is Large ribosomal subunit protein bL25 (208 aa).

The tract at residues 178 to 208 is disordered; the sequence is LPPQQSEVPEPDSEEEPKEPEAIKEKDNDGE. Acidic residues predominate over residues 186 to 195; the sequence is PEPDSEEEPK. Basic and acidic residues predominate over residues 196-208; sequence EPEAIKEKDNDGE.

Belongs to the bacterial ribosomal protein bL25 family. CTC subfamily. Part of the 50S ribosomal subunit; part of the 5S rRNA/L5/L18/L25 subcomplex. Contacts the 5S rRNA. Binds to the 5S rRNA independently of L5 and L18.

Its function is as follows. This is one of the proteins that binds to the 5S RNA in the ribosome where it forms part of the central protuberance. The chain is Large ribosomal subunit protein bL25 from Bacillus pumilus (strain SAFR-032).